The following is a 319-amino-acid chain: Acetyl-coenzyme A carboxylase carboxyl transferase subunit alpha (319 aa).

In terms of domain architecture, CoA carboxyltransferase C-terminal spans 39-293 (KLEKKVDRMR…HEAIARQLKE (255 aa)).

This sequence belongs to the AccA family. Acetyl-CoA carboxylase is a heterohexamer composed of biotin carboxyl carrier protein (AccB), biotin carboxylase (AccC) and two subunits each of ACCase subunit alpha (AccA) and ACCase subunit beta (AccD).

The protein resides in the cytoplasm. The enzyme catalyses N(6)-carboxybiotinyl-L-lysyl-[protein] + acetyl-CoA = N(6)-biotinyl-L-lysyl-[protein] + malonyl-CoA. It functions in the pathway lipid metabolism; malonyl-CoA biosynthesis; malonyl-CoA from acetyl-CoA: step 1/1. Its function is as follows. Component of the acetyl coenzyme A carboxylase (ACC) complex. First, biotin carboxylase catalyzes the carboxylation of biotin on its carrier protein (BCCP) and then the CO(2) group is transferred by the carboxyltransferase to acetyl-CoA to form malonyl-CoA. The protein is Acetyl-coenzyme A carboxylase carboxyl transferase subunit alpha of Geobacter sulfurreducens (strain ATCC 51573 / DSM 12127 / PCA).